We begin with the raw amino-acid sequence, 220 residues long: Thymidylate kinase (220 aa).

Gly10–Ser17 is an ATP binding site.

It belongs to the thymidylate kinase family.

It carries out the reaction dTMP + ATP = dTDP + ADP. Phosphorylation of dTMP to form dTDP in both de novo and salvage pathways of dTTP synthesis. The chain is Thymidylate kinase from Prochlorococcus marinus (strain SARG / CCMP1375 / SS120).